A 294-amino-acid chain; its full sequence is Indole-3-glycerol phosphate synthase (294 aa).

Belongs to the TrpC family.

The catalysed reaction is 1-(2-carboxyphenylamino)-1-deoxy-D-ribulose 5-phosphate + H(+) = (1S,2R)-1-C-(indol-3-yl)glycerol 3-phosphate + CO2 + H2O. It functions in the pathway amino-acid biosynthesis; L-tryptophan biosynthesis; L-tryptophan from chorismate: step 4/5. This chain is Indole-3-glycerol phosphate synthase, found in Synechococcus sp. (strain CC9902).